The chain runs to 659 residues: Serine/threonine-protein kinase StkP (659 aa).

Residues 1-342 (MIQIGKIFAG…PQAPKKHRFK (342 aa)) lie on the Cytoplasmic side of the membrane. The region spanning 12-273 (YRIVKQIGRG…EMYVDLSSSL (262 aa)) is the Protein kinase domain. Residues 18–26 (IGRGGMADV) and K42 contribute to the ATP site. D136 (proton acceptor) is an active-site residue. A helical transmembrane segment spans residues 343–363 (MRYLILLASLVLVAASLIWIL). Residues 364–659 (SRSPATIAIP…YKPKTTSATP (296 aa)) are Periplasmic-facing. PASTA domains are found at residues 366–433 (SPAT…VVSS), 434–505 (GKQS…TVAK), 506–577 (KATT…TVAK), and 578–651 (KVTS…SIYK). The interval 541–561 (EEESSESEPGTIMKQSPGAGT) is disordered.

This sequence belongs to the protein kinase superfamily. Ser/Thr protein kinase family. As to quaternary structure, homodimer. StkP forms dimers through its transmembrane and extracellular domains. Dimer formation likely promotes autophosphorylation activity and might be necessary for targeting StkP substrate. Interacts with PhpP via its kinase domain. Autophosphorylation occurs predominantly on threonine residue(s) and weakly on serine residue(s). Dephosphorylated by PhpP.

The protein localises to the cell membrane. The catalysed reaction is L-seryl-[protein] + ATP = O-phospho-L-seryl-[protein] + ADP + H(+). The enzyme catalyses L-threonyl-[protein] + ATP = O-phospho-L-threonyl-[protein] + ADP + H(+). With respect to regulation, stkP is activated continuously during growth and its activity is inhibited upon growth arrest. Inhibited by staurosporine, a known protein kinase inhibitor. In terms of biological role, protein kinase involved in signal transduction pathways that regulate various cellular processes. Likely senses intracellular peptidoglycan subunits present in the cell division septa of actively growing cells; thus, intracellular unlinked peptidoglycan may serve as the signal molecules that trigger StkP phosphorylation activity on a set of substrates. Plays a crucial role in the regulation of cell shape and cell division of S.pneumoniae through control of at least DivIVA activity. Is involved in competence triggering, via the transduction of signals culminating directly or indirectly in ComD activation. Is important for the resistance of S.pneumoniae to various environmental stress conditions. Appears to be a global regulator that positively controls the transcription of a set of genes encoding functions involved in cell wall metabolism, pyrimidine biosynthesis, DNA repair, iron uptake, and oxidative stress response, and that seems to down-regulate genes employed in competence. Since StkP is unlikely to directly regulate transcription, the input signal must be transmitted through an effector molecule. Identified target substrates that are specifically phosphorylated by StkP in vivo, mainly on threonine residues, are DivIVA, GlmM, PpaC, MapZ, KhpB (also called EloR/Jag) and StkP itself. Autophosphorylated StkP is a substrate for the cotranscribed protein phosphatase PhpP; PhpP and StkP appear to constitute a functional signaling couple in vivo. The chain is Serine/threonine-protein kinase StkP (stkP) from Streptococcus pneumoniae.